The following is a 53-amino-acid chain: Large ribosomal subunit protein bL32c (53 aa).

Belongs to the bacterial ribosomal protein bL32 family.

It is found in the plastid. The protein localises to the chloroplast. This chain is Large ribosomal subunit protein bL32c, found in Phaseolus vulgaris (Kidney bean).